The primary structure comprises 59 residues: UPF0391 membrane protein lpg2521 (59 aa).

2 consecutive transmembrane segments (helical) span residues 5 to 25 (ALIF…GIAV) and 30 to 50 (IAKI…IMGL).

The protein belongs to the UPF0391 family.

The protein localises to the cell membrane. This chain is UPF0391 membrane protein lpg2521, found in Legionella pneumophila subsp. pneumophila (strain Philadelphia 1 / ATCC 33152 / DSM 7513).